The primary structure comprises 232 residues: MSVRHTIRAMYHMEQSWFSRVGQFTDSIEEFLIAFFMGAMTLLTFANVIMRYLFNDNILWALEGTVFMFAWMVLVGASFGVKRHFHIGVDVLINIAPARLRKLYALVAVACCLAFSILLLIGSWNYWHPFITERAWYETDDIPMPDMLQFLADWVNEGERYEKLPRFIPYAALPIGMALLTFRFLQIAWQIITGKLDRMIAGHEAEEDLEALKAELSEAGEAMMPKTQGKEK.

Helical transmembrane passes span 30 to 50 (EFLI…NVIM), 58 to 78 (ILWA…VGAS), 103 to 123 (LYAL…LIGS), and 167 to 187 (FIPY…FLQI).

Belongs to the TRAP transporter small permease family. In terms of assembly, the complex comprises the extracytoplasmic solute receptor protein DctP, and the two transmembrane proteins DctQ and DctM.

It is found in the cell inner membrane. Its function is as follows. Part of the tripartite ATP-independent periplasmic (TRAP) transport system DctPQM involved in C4-dicarboxylates uptake. This Vibrio cholerae serotype O1 (strain ATCC 39315 / El Tor Inaba N16961) protein is C4-dicarboxylate TRAP transporter small permease protein DctQ.